We begin with the raw amino-acid sequence, 400 residues long: Poly(A) polymerase type 3 (400 aa).

ATP is bound by residues 97 to 99 (FGS), T106, 110 to 112 (DID), D164, K225, Y234, and 243 to 244 (GV). The Mg(2+) site is built by D110, D112, and D164. The Nuclear localization signal signature appears at 382–390 (GEIINKNKK).

It belongs to the poly(A) polymerase family. In terms of assembly, monomer. Mg(2+) is required as a cofactor. The cofactor is Mn(2+).

It is found in the nucleus. The catalysed reaction is RNA(n) + ATP = RNA(n)-3'-adenine ribonucleotide + diphosphate. Functionally, polymerase that creates the 3'-poly(A) tail of mRNA's. May acquire specificity through interaction with a cleavage and polyadenylation factor (CPSF). The chain is Poly(A) polymerase type 3 from Xenopus laevis (African clawed frog).